The sequence spans 314 residues: GATA zinc finger domain-containing protein 19 (314 aa).

The protein is GATA zinc finger domain-containing protein 19 (gtaS) of Dictyostelium discoideum (Social amoeba).